The sequence spans 948 residues: RNA polymerase-associated protein RapA (948 aa).

In terms of domain architecture, Helicase ATP-binding spans 164-332; that stretch reads EVADRSAPRV…FARLRLLDPN (169 aa). 177-184 lines the ATP pocket; sequence DEVGLGKT. The DEAH box signature appears at 278–281; it reads DEAH. The region spanning 473-627 is the Helicase C-terminal domain; it reads RVDWLIDTLK…TCPTGNALQH (155 aa).

Belongs to the SNF2/RAD54 helicase family. RapA subfamily. In terms of assembly, interacts with the RNAP. Has a higher affinity for the core RNAP than for the holoenzyme. Its ATPase activity is stimulated by binding to RNAP.

Transcription regulator that activates transcription by stimulating RNA polymerase (RNAP) recycling in case of stress conditions such as supercoiled DNA or high salt concentrations. Probably acts by releasing the RNAP, when it is trapped or immobilized on tightly supercoiled DNA. Does not activate transcription on linear DNA. Probably not involved in DNA repair. This Pseudomonas putida (strain ATCC 47054 / DSM 6125 / CFBP 8728 / NCIMB 11950 / KT2440) protein is RNA polymerase-associated protein RapA.